A 544-amino-acid chain; its full sequence is MSIFIGGAWPYANGSLHLGHIASLLPGDILARYYRAKGEHVLYVSGSDCNGTPITIRAKQEGVTVKEIADKYHEEFERCFRSLGFTYDCYTRTDSEHHHETVQKVFLRLLEEGYIYKKVVEQAYCETCTQFLPDRYVEGICPHCHEAARGDQCDACSAILDPLDLLEKKCKLCGSTPSVQETEHFYFALHKFQQQIKEAVEIAKQKGTWRDNAIQLTERYLKEGLQDRAVSRDLPIGVPIPVAGYEDKKIYVWIEAVTGYYSASKHWVEETGKDDQEFWDKEAKTYYVHGKDNIPFHSIIWPAVLLGIGEEAIPRHIVSNEYLTVEKRKLSTSKNWAVWVPDILERYNPDSIRYFLTVNAPENRDTDFSWREFIYSHNSELLGAYGNFVNRTLKFIEKYYGGTVPKGSIDVELKDKVEGLYKSVGEAIEQTKFKVALETIFDAVRFANKYFDEKQPWKQREDDPVSCEETIYNCVYLIANFAQLLEPFLPFSSERVRNTLSSVKVNWEPQNTLPNRIDNVQPLFERIDVKQIEHEVEKLYGAVK.

The short motif at 10-20 is the 'HIGH' region element; it reads PYANGSLHLGH. Positions 141, 144, 153, and 156 each coordinate Zn(2+). Residues 329 to 333 carry the 'KMSKS' region motif; the sequence is KLSTS. An ATP-binding site is contributed by T332.

It belongs to the class-I aminoacyl-tRNA synthetase family. MetG type 1 subfamily. Monomer. Zn(2+) serves as cofactor.

It is found in the cytoplasm. The catalysed reaction is tRNA(Met) + L-methionine + ATP = L-methionyl-tRNA(Met) + AMP + diphosphate. Is required not only for elongation of protein synthesis but also for the initiation of all mRNA translation through initiator tRNA(fMet) aminoacylation. In Bacillus mycoides (strain KBAB4) (Bacillus weihenstephanensis), this protein is Methionine--tRNA ligase.